Here is a 514-residue protein sequence, read N- to C-terminus: 2,3-bisphosphoglycerate-independent phosphoglycerate mutase (514 aa).

Mn(2+)-binding residues include Asp14 and Ser64. Catalysis depends on Ser64, which acts as the Phosphoserine intermediate. Substrate contacts are provided by residues His125, 155-156, Arg187, Arg193, 263-266, and Lys336; these read RD and RADR. Mn(2+)-binding residues include Asp403, His407, Asp444, His445, and His463.

It belongs to the BPG-independent phosphoglycerate mutase family. Monomer. Mn(2+) serves as cofactor.

It catalyses the reaction (2R)-2-phosphoglycerate = (2R)-3-phosphoglycerate. Its pathway is carbohydrate degradation; glycolysis; pyruvate from D-glyceraldehyde 3-phosphate: step 3/5. Its function is as follows. Catalyzes the interconversion of 2-phosphoglycerate and 3-phosphoglycerate. This chain is 2,3-bisphosphoglycerate-independent phosphoglycerate mutase, found in Escherichia coli O1:K1 / APEC.